We begin with the raw amino-acid sequence, 170 residues long: Large ribosomal subunit protein uL15 (170 aa).

Positions 1-12 are enriched in basic and acidic residues; sequence MKLHDLRPAEGA. The segment at 1–52 is disordered; sequence MKLHDLRPAEGAHRKRKRIGRGHGSGKGKTGGKGMMGQKARSGPGPYRTFEG. The segment covering 13 to 26 has biased composition (basic residues); that stretch reads HRKRKRIGRGHGSG.

It belongs to the universal ribosomal protein uL15 family. As to quaternary structure, part of the 50S ribosomal subunit.

Functionally, binds to the 23S rRNA. In Chloroflexus aurantiacus (strain ATCC 29366 / DSM 635 / J-10-fl), this protein is Large ribosomal subunit protein uL15.